We begin with the raw amino-acid sequence, 65 residues long: UPF0337 protein gbs1203 (65 aa).

Basic and acidic residues predominate over residues 1–12 (MSEEKFDAKVDK). The disordered stretch occupies residues 1-29 (MSEEKFDAKVDKVSGSVKESVGKLTGDKE).

The protein belongs to the UPF0337 (CsbD) family.

This chain is UPF0337 protein gbs1203, found in Streptococcus agalactiae serotype III (strain NEM316).